Reading from the N-terminus, the 183-residue chain is ATP synthase subunit delta (183 aa).

It belongs to the ATPase delta chain family. F-type ATPases have 2 components, F(1) - the catalytic core - and F(0) - the membrane proton channel. F(1) has five subunits: alpha(3), beta(3), gamma(1), delta(1), epsilon(1). F(0) has three main subunits: a(1), b(2) and c(10-14). The alpha and beta chains form an alternating ring which encloses part of the gamma chain. F(1) is attached to F(0) by a central stalk formed by the gamma and epsilon chains, while a peripheral stalk is formed by the delta and b chains.

It localises to the cell inner membrane. Its function is as follows. F(1)F(0) ATP synthase produces ATP from ADP in the presence of a proton or sodium gradient. F-type ATPases consist of two structural domains, F(1) containing the extramembraneous catalytic core and F(0) containing the membrane proton channel, linked together by a central stalk and a peripheral stalk. During catalysis, ATP synthesis in the catalytic domain of F(1) is coupled via a rotary mechanism of the central stalk subunits to proton translocation. In terms of biological role, this protein is part of the stalk that links CF(0) to CF(1). It either transmits conformational changes from CF(0) to CF(1) or is implicated in proton conduction. In Vesicomyosocius okutanii subsp. Calyptogena okutanii (strain HA), this protein is ATP synthase subunit delta.